We begin with the raw amino-acid sequence, 337 residues long: Vacuolar protein sorting-associated protein 26B-B (337 aa).

Residues 313 to 337 (RFEGTSHPETRPQHSGAAALEQEHE) form a disordered region.

Belongs to the VPS26 family. Component of the heterotrimeric retromer cargo-selective complex (CSC) which is believed to associate with variable sorting nexins to form functionally distinct retromer complex variants.

It localises to the cytoplasm. The protein localises to the membrane. It is found in the endosome. Functionally, acts as a component of the retromer cargo-selective complex (CSC). The CSC is believed to be the core functional component of retromer or respective retromer complex variants acting to prevent missorting of selected transmembrane cargo proteins into the lysosomal degradation pathway. Retromer mediates retrograde transport of cargo proteins from endosomes to the trans-Golgi network (TGN). This Xenopus laevis (African clawed frog) protein is Vacuolar protein sorting-associated protein 26B-B (vps26b-b).